A 446-amino-acid chain; its full sequence is Na(+)-translocating NADH-quinone reductase subunit A (446 aa).

This sequence belongs to the NqrA family. Composed of six subunits; NqrA, NqrB, NqrC, NqrD, NqrE and NqrF.

It catalyses the reaction a ubiquinone + n Na(+)(in) + NADH + H(+) = a ubiquinol + n Na(+)(out) + NAD(+). In terms of biological role, NQR complex catalyzes the reduction of ubiquinone-1 to ubiquinol by two successive reactions, coupled with the transport of Na(+) ions from the cytoplasm to the periplasm. NqrA to NqrE are probably involved in the second step, the conversion of ubisemiquinone to ubiquinol. This Vibrio anguillarum (Listonella anguillarum) protein is Na(+)-translocating NADH-quinone reductase subunit A.